Consider the following 545-residue polypeptide: Adenine deaminase (545 aa).

Belongs to the metallo-dependent hydrolases superfamily. Adenine deaminase family. Mn(2+) is required as a cofactor.

It carries out the reaction adenine + H2O + H(+) = hypoxanthine + NH4(+). The polypeptide is Adenine deaminase (Parabacteroides distasonis (strain ATCC 8503 / DSM 20701 / CIP 104284 / JCM 5825 / NCTC 11152)).